The following is a 110-amino-acid chain: Protein mistic (110 aa).

At 1-7 the chain is on the cytoplasmic side; that stretch reads MFCTFFE. A helical transmembrane segment spans residues 8–22; the sequence is KHHRKWDILLEKSTG. Residues 23–31 lie on the Extracellular side of the membrane; that stretch reads VMEAMKVTS. A helical membrane pass occupies residues 32 to 55; it reads EEKEQLSTAIDRMNEGLDAFIQLY. Topologically, residues 56 to 66 are cytoplasmic; sequence NESEIDEPLIQ. The chain crosses the membrane as a helical span at residues 67-81; sequence LDDDTAELMKQARDM. Topologically, residues 82–88 are extracellular; sequence YGQEKLN. The chain crosses the membrane as a helical span at residues 89–102; that stretch reads EKLNTIIKQILSIS. Residues 103–110 are Cytoplasmic-facing; that stretch reads VSEEGEKE.

As to quaternary structure, monomer.

Its subcellular location is the cell membrane. Chaperone that facilitates the production and integration of integral membrane proteins into the bacterial lipid bilayer. In Bacillus subtilis (strain 168), this protein is Protein mistic (mstX).